We begin with the raw amino-acid sequence, 1863 residues long: Transient receptor potential cation channel subfamily M member 7 (1863 aa).

Met1 is modified (N-acetylmethionine). Topologically, residues 1–850 are cytoplasmic; sequence MSQKSWIEST…ITRKFYAFYH (850 aa). Ser101 is subject to Phosphoserine. Over residues 544–555 the composition is skewed to low complexity; it reads NRRSGRNTSSST. The segment at 544–574 is disordered; it reads NRRSGRNTSSSTPQLRKSHETFGNRADKKEK. Over residues 560–573 the composition is skewed to basic and acidic residues; that stretch reads KSHETFGNRADKKE. The helical transmembrane segment at 851–876 threads the bilayer; it reads APIVKFWFNTLAYLGFLMLYTFVVLV. At 877-882 the chain is on the extracellular side; that stretch reads KMEQLP. The helical transmembrane segment at 883–904 threads the bilayer; sequence SVQEWIVIAYIFTYAIEKVREV. The Cytoplasmic portion of the chain corresponds to 905-923; sequence FMSEAGKISQKIKVWFSDY. A helical membrane pass occupies residues 924–943; sequence FNVSDTIAIISFFVGFGLRF. The Extracellular segment spans residues 944 to 956; the sequence is GAKWNYINAYDNH. A helical transmembrane segment spans residues 957–980; it reads VFVAGRLIYCLNIIFWYVRLLDFL. Topologically, residues 981–999 are cytoplasmic; that stretch reads AVNQQAGPYVMMIGKMVAN. A helical transmembrane segment spans residues 1000–1023; sequence MFYIVVIMALVLLSFGVPRKAILY. At 1024 to 1025 the chain is on the extracellular side; sequence PH. Positions 1026 to 1066 form an intramembrane region, pore-forming; the sequence is EEPSWSLAKDIVFHPYWMIFGEVYAYEIDVCANDSTLPTIC. Residues 1067–1069 lie on the Extracellular side of the membrane; it reads GPG. A helical transmembrane segment spans residues 1070–1098; sequence TWLTPFLQAVYLFVQYIIMVNLLIAFFNN. Residues 1099–1863 lie on the Cytoplasmic side of the membrane; sequence VYLQVKAISN…EATNSVRLML (765 aa). S-palmitoyl cysteine attachment occurs at residues Cys1143, Cys1144, and Cys1146. Thr1163 is subject to Phosphothreonine. A phosphoserine mark is found at Ser1191, Ser1193, Ser1224, Ser1255, and Ser1258. Residues 1198 to 1250 are a coiled coil; the sequence is RVTFERVEQMSIQIKEVGDRVNYIKRSLQSLDSQIGHLQDLSALTVDTLKTLT. Thr1265 is subject to Phosphothreonine. Ser1300, Ser1357, Ser1360, Ser1385, Ser1386, Ser1389, Ser1394, Ser1395, and Ser1403 each carry phosphoserine. Positions 1380–1418 are disordered; that stretch reads NQKLGSSPNSSPHMSSPPTKFSVSTPSQPSCKSHLESTT. The span at 1385 to 1397 shows a compositional bias: low complexity; sequence SSPNSSPHMSSPP. Residues 1398–1410 are compositionally biased toward polar residues; the sequence is TKFSVSTPSQPSC. Thr1404 carries the post-translational modification Phosphothreonine. A phosphoserine mark is found at Ser1406 and Ser1445. Thr1454 carries the phosphothreonine modification. Ser1455 carries the post-translational modification Phosphoserine. Residues Thr1466 and Thr1470 each carry the phosphothreonine modification. Phosphoserine occurs at positions 1491, 1498, 1502, 1511, 1525, and 1531. Positions 1498-1539 are disordered; the sequence is SRRASTEDSPEVDSKAALLPDWLRDRPSNREMPSEGGTLNGL. Basic and acidic residues predominate over residues 1519 to 1530; the sequence is WLRDRPSNREMP. Thr1535 is modified (phosphothreonine). Ser1541 is subject to Phosphoserine. Residue Thr1549 is modified to Phosphothreonine. A phosphoserine mark is found at Ser1565 and Ser1567. Thr1581 bears the Phosphothreonine mark. Positions 1592 to 1822 constitute an Alpha-type protein kinase domain; that stretch reads ILNNSMSSWS…CCRKLKLPDL (231 aa). Ser1596 and Ser1613 each carry phosphoserine. 5 residues coordinate ADP: Gly1619, Gly1620, Leu1621, Arg1622, and Lys1646. Ser1658 is subject to Phosphoserine. Residue Thr1683 is modified to Phosphothreonine. ADP contacts are provided by Glu1718, Glu1719, and Met1721. Residue His1751 coordinates Zn(2+). The active-site Proton acceptor is the Asp1765. Residue Asp1775 participates in ADP binding. Phosphoserine is present on Ser1777. Zn(2+) contacts are provided by His1808, Cys1810, and Cys1814. Thr1828 carries the post-translational modification Phosphothreonine. The disordered stretch occupies residues 1838–1863; it reads ESSDLNLQSGNSTKESEATNSVRLML. The span at 1841–1863 shows a compositional bias: polar residues; it reads DLNLQSGNSTKESEATNSVRLML. Ser1846, Ser1849, and Ser1858 each carry phosphoserine.

It in the C-terminal section; belongs to the protein kinase superfamily. Alpha-type protein kinase family. ALPK subfamily. The protein in the N-terminal section; belongs to the transient receptor (TC 1.A.4) family. LTrpC subfamily. TRPM7 sub-subfamily. As to quaternary structure, homodimer. Homotetramer. Forms heteromers with TRPM6; heteromeric channels are functionally different from the homomeric channels. Interacts with PLCB1. Zn(2+) is required as a cofactor. Palmitoylated; palmitoylation at Cys-1143, Cys-1144 and Cys-1146 promotes TRPM7 trafficking from the Golgi to the surface membrane. Post-translationally, autophosphorylated; autophosphorylation regulates TRPM7 kinase activity towards its substrates. In terms of processing, the C-terminal kinase domain can be cleaved from the channel segment in a cell-type-specific fashion. TRPM7 is cleaved by caspase-8, dissociating the kinase from the ion-conducting pore. The cleaved kinase fragments (M7CKs) can translocate to the cell nucleus and binds chromatin-remodeling complex proteins in a Zn(2+)-dependent manner to ultimately phosphorylate specific Ser/Thr residues of histones. As to expression, found to be expressed in brain and skeletal muscle, with stronger signals in kidney, heart, liver and spleen.

The protein localises to the cell membrane. Its subcellular location is the cytoplasmic vesicle membrane. It localises to the nucleus. The catalysed reaction is L-seryl-[protein] + ATP = O-phospho-L-seryl-[protein] + ADP + H(+). It carries out the reaction L-threonyl-[protein] + ATP = O-phospho-L-threonyl-[protein] + ADP + H(+). It catalyses the reaction Mg(2+)(in) = Mg(2+)(out). The enzyme catalyses Ca(2+)(in) = Ca(2+)(out). The catalysed reaction is Zn(2+)(in) = Zn(2+)(out). Channel displays constitutive activity. Channel activity is negatively regulated by cytosolic Mg(2+), Mg-ATP and low intracellular pH. Resting free cytosolic Mg(2+) and Mg-ATP concentrations seem to be sufficient to block native TRPM7 channel activity. TRPM7 channel activity is highly dependent on membrane levels of phosphatidylinositol 4,5 bisphosphate (PIP2). PIP2 hydrolysis negatively regulates TRPM7 channel activity. TRPM7 kinase activity does not affect channel activity. The kinase activity is controlled through the autophosphorylation of a serine/threonine-rich region located N-terminal to the catalytic domain. Bifunctional protein that combines an ion channel with an intrinsic kinase domain, enabling it to modulate cellular functions either by conducting ions through the pore or by phosphorylating downstream proteins via its kinase domain. The channel is highly permeable to divalent cations, specifically calcium (Ca2+), magnesium (Mg2+) and zinc (Zn2+) and mediates their influx. Controls a wide range of biological processes such as Ca2(+), Mg(2+) and Zn(2+) homeostasis, vesicular Zn(2+) release channel and intracellular Ca(2+) signaling, embryonic development, immune responses, cell motility, proliferation and differentiation. The C-terminal alpha-kinase domain autophosphorylates cytoplasmic residues of TRPM7. TRPM7 phosphorylates SMAD2, suggesting that TRPM7 kinase may play a role in activating SMAD signaling pathways. In vitro, TRPM7 kinase phosphorylates ANXA1 (annexin A1), myosin II isoforms and a variety of proteins with diverse cellular functions. Functionally, the cleaved channel exhibits substantially higher current and potentiates Fas receptor signaling. In terms of biological role, the C-terminal kinase domain can be cleaved from the channel segment in a cell-type-specific fashion. In immune cells, the TRPM7 kinase domain is clipped from the channel domain by caspases in response to Fas-receptor stimulation. The cleaved kinase fragments can translocate to the nucleus, and bind chromatin-remodeling complex proteins in a Zn(2+)-dependent manner to ultimately phosphorylate specific Ser/Thr residues of histones known to be functionally important for cell differentiation and embryonic development. This is Transient receptor potential cation channel subfamily M member 7 (Trpm7) from Mus musculus (Mouse).